The chain runs to 198 residues: Recombination protein RecR (198 aa).

Residues 57–72 (CSVCGNITDEDPCEIC) form a C4-type zinc finger. The Toprim domain maps to 80–175 (EMILVVEQPK…KVTRLAHGLA (96 aa)).

This sequence belongs to the RecR family.

In terms of biological role, may play a role in DNA repair. It seems to be involved in an RecBC-independent recombinational process of DNA repair. It may act with RecF and RecO. The polypeptide is Recombination protein RecR (Latilactobacillus sakei subsp. sakei (strain 23K) (Lactobacillus sakei subsp. sakei)).